The sequence spans 107 residues: UPF0060 membrane protein ZMO1566 (107 aa).

Transmembrane regions (helical) follow at residues 4-24 (LLYI…WAWI), 29-49 (SPLW…LLTF), 55-75 (AGKA…LWSW), and 84-104 (HWDL…LWMP).

This sequence belongs to the UPF0060 family.

It is found in the cell inner membrane. The polypeptide is UPF0060 membrane protein ZMO1566 (Zymomonas mobilis subsp. mobilis (strain ATCC 31821 / ZM4 / CP4)).